We begin with the raw amino-acid sequence, 1088 residues long: MERSPEEGAGPEPSGQSPATDSTRERDGGSGVPPAGPGAASEALAVLTSFGRRLLVLVPVYLAGAAGLSVGFVLFGLALYLGWRRVRDGKERSLRAARQLLDDEERITAETLYMSHRELPAWVSFPDVEKAEWLNKIVVQVWPFLGQYMEKLLAETVAPAVRGANPHLQTFTFTRVELGEKPVRIIGVKVHPSQRKDQILLDLNVSYVGDLQIDVEVKKYFCKAGVKGMQLHGVLRVILEPLIGDLPIVGAVSMFFIKRPTLDINWTGMTNLLDIPGLSSLSDTMIMDSIAAFLVLPNRLLVPLVPDLQDVAQLRSPLPRGIIRIHLLAARGLSSKDKYVKGLIEGKSDPYALVRVGTQTFCSRVIDEELNPHWGETYEVIVHEVPGQEIEVEVFDKDPDKDDFLGRMKLDVGKVLQAGVLDNWYPLQGGQGQVHLRLEWLSLLPDAEKLDQVLQWNRGITSRPEPPSAAILVVYLDRAQDLPLKKGNKEPNPMVQLSVQDVTQESKATYSTNCPVWEEAFRFFLQDPRSQELDVQVKDDSRALTLGALTLPLARLLTASELTLDQWFQLSSSGPNSRLYMKLVMRILYLDSSEMRLPTEPGAQDWDSESPETGSSVDAPPRPYHTTPNSHFGTENVLRIHVLEAQDLIAKDRFLGGLVKGKSDPYVKLKVAGRSLRTHVVREDLNPRWNEVFEVIVTSIPGQELDIEVFDKDLDKDDFLGRYKVGLTTVLNSGFLDEWLTLEDVPSGRLHLRLERLSPRPTAAELEEVLQVNSLIQTQKSSELAAALLSVYLERSEDLPLRKGTKPPSPYAILTVGETSHKTKTVSQTSAPIWEESASFLIRKPHAESLELQVRGEGTGTLGSISLPLSELLQEEQLCLDRWFALSGQGQVLMRVQLGILVSQHSGVEAHSHSSSSLNEEPEVLGDPTHTASPVLEVRHRLTHGDSPSEALIGPLGQVKLTVWYHSDEQKLISIIHSCRALRQNGRDLPDPYVSVLLLPDKNRGTKRKTSQKKRTLNPEFNERFEWDLPLDGTLRRKLDVSVKSNSSFMSRERELLGKVQLDLAEIDLSQGAAQWYDLIDDRDKGGS.

At Met1 the chain carries N-acetylmethionine. Over 1–30 the chain is Cytoplasmic; it reads MERSPEEGAGPEPSGQSPATDSTRERDGGS. A disordered region spans residues 1-38; it reads MERSPEEGAGPEPSGQSPATDSTRERDGGSGVPPAGPG. A helical transmembrane segment spans residues 31–51; that stretch reads GVPPAGPGAASEALAVLTSFG. Residues 52-54 are Lumenal-facing; the sequence is RRL. Residues 55–75 form a helical membrane-spanning segment; sequence LVLVPVYLAGAAGLSVGFVLF. Residues 76 to 1088 are Cytoplasmic-facing; that stretch reads GLALYLGWRR…LIDDRDKGGS (1013 aa). Positions 127 to 305 constitute an SMP-LTD domain; sequence DVEKAEWLNK…LPNRLLVPLV (179 aa). 4 C2 domains span residues 304–425, 446–572, 618–740, and 771–888; these read LVPD…DNWY, DAEK…QLSS, DAPP…DEWL, and QVNS…ALSG. Phosphoserine; by CDK5 is present on Ser316. Ca(2+) is bound by residues Lys336, Asp337, Asp349, Asp396, Asp398, Asp400, Asp402, and Asp403. The disordered stretch occupies residues 599–630; sequence TEPGAQDWDSESPETGSSVDAPPRPYHTTPNS. At Lys806 the chain carries N6-acetyllysine. Ser809 is subject to Phosphoserine. The segment at 911–930 is disordered; the sequence is HSHSSSSLNEEPEVLGDPTH. 2 positions are modified to phosphoserine: Ser933 and Ser947. Residues 955-1077 enclose the C2 5 domain; sequence PLGQVKLTVW…DLSQGAAQWY (123 aa). Tyr993 carries the post-translational modification Phosphotyrosine. The segment at 1002–1009 is required for phosphatidylinositol 4,5-bisphosphate-dependent location at the cell membrane; that stretch reads KNRGTKRK.

It belongs to the extended synaptotagmin family. As to quaternary structure, interacts with ESYT2 and ESYT3. Interacts with ADGRD1; inhibiting the G-protein-coupled receptor activity of ADGRD1. Interaction with ADGRD1 is abolished when cytosolic calcium increases, relieving ADGRD1 G-protein-coupled receptor activity. Interacts (phosphorylated form) with SLC2A4. In terms of processing, phosphorylated on Ser residues in insulin-treated adipocytes (in vitro); this promotes interaction with SLC2A4. As to expression, ubiquitously expressed with a higher expression in spleen and white adipose tissue.

Its subcellular location is the endoplasmic reticulum membrane. The protein localises to the cell membrane. In terms of biological role, binds calcium (via the C2 domains) and translocates to sites of contact between the endoplasmic reticulum and the cell membrane in response to increased cytosolic calcium levels. Helps tether the endoplasmic reticulum to the cell membrane and promotes the formation of appositions between the endoplasmic reticulum and the cell membrane. Acts as an inhibitor of ADGRD1 G-protein-coupled receptor activity in absence of cytosolic calcium. Binds glycerophospholipids in a barrel-like domain and may play a role in cellular lipid transport. This Rattus norvegicus (Rat) protein is Extended synaptotagmin-1 (Esyt1).